The sequence spans 265 residues: Putative pyruvate, phosphate dikinase regulatory protein 2 (265 aa).

150-157 (GVSRTSKT) provides a ligand contact to ADP.

This sequence belongs to the pyruvate, phosphate/water dikinase regulatory protein family. PDRP subfamily.

The enzyme catalyses N(tele)-phospho-L-histidyl/L-threonyl-[pyruvate, phosphate dikinase] + ADP = N(tele)-phospho-L-histidyl/O-phospho-L-threonyl-[pyruvate, phosphate dikinase] + AMP + H(+). It catalyses the reaction N(tele)-phospho-L-histidyl/O-phospho-L-threonyl-[pyruvate, phosphate dikinase] + phosphate + H(+) = N(tele)-phospho-L-histidyl/L-threonyl-[pyruvate, phosphate dikinase] + diphosphate. Functionally, bifunctional serine/threonine kinase and phosphorylase involved in the regulation of the pyruvate, phosphate dikinase (PPDK) by catalyzing its phosphorylation/dephosphorylation. In Latilactobacillus sakei subsp. sakei (strain 23K) (Lactobacillus sakei subsp. sakei), this protein is Putative pyruvate, phosphate dikinase regulatory protein 2.